Here is a 433-residue protein sequence, read N- to C-terminus: Glutamate-1-semialdehyde 2,1-aminomutase (433 aa).

At Lys273 the chain carries N6-(pyridoxal phosphate)lysine.

Belongs to the class-III pyridoxal-phosphate-dependent aminotransferase family. HemL subfamily. Homodimer. It depends on pyridoxal 5'-phosphate as a cofactor.

The protein resides in the cytoplasm. The enzyme catalyses (S)-4-amino-5-oxopentanoate = 5-aminolevulinate. The protein operates within porphyrin-containing compound metabolism; protoporphyrin-IX biosynthesis; 5-aminolevulinate from L-glutamyl-tRNA(Glu): step 2/2. It participates in porphyrin-containing compound metabolism; chlorophyll biosynthesis. In Gloeothece citriformis (strain PCC 7424) (Cyanothece sp. (strain PCC 7424)), this protein is Glutamate-1-semialdehyde 2,1-aminomutase.